The sequence spans 171 residues: S-ribosylhomocysteine lyase (171 aa).

The Fe cation site is built by His-54, His-58, and Cys-128.

This sequence belongs to the LuxS family. As to quaternary structure, homodimer. It depends on Fe cation as a cofactor.

It carries out the reaction S-(5-deoxy-D-ribos-5-yl)-L-homocysteine = (S)-4,5-dihydroxypentane-2,3-dione + L-homocysteine. Its function is as follows. Involved in the synthesis of autoinducer 2 (AI-2) which is secreted by bacteria and is used to communicate both the cell density and the metabolic potential of the environment. The regulation of gene expression in response to changes in cell density is called quorum sensing. Catalyzes the transformation of S-ribosylhomocysteine (RHC) to homocysteine (HC) and 4,5-dihydroxy-2,3-pentadione (DPD). The protein is S-ribosylhomocysteine lyase of Klebsiella pneumoniae (strain 342).